The sequence spans 1302 residues: Multidrug resistance protein homolog 65 (1302 aa).

The segment at 1–23 (MERDEVSTSSSEGKSQEEAPMAE) is disordered. Residues 1–48 (MERDEVSTSSSEGKSQEEAPMAEGLEPTEPIAFLKLFRFSTYGEIGWL) are Cytoplasmic-facing. An ABC transmembrane type-1 1 domain is found at 48 to 369 (LFFGFIMCCI…TAPFLESFAT (322 aa)). A helical transmembrane segment spans residues 49-69 (FFGFIMCCIKALTLPAVVIIY). Topologically, residues 70 to 118 (SEFTSMLVDRAMQFGTSSNVHALPLFGGGKTLTNASREENNEALYDDSI) are extracellular. N-linked (GlcNAc...) asparagine glycosylation is present at Asn-103. Residues 119–147 (SYGILLTIASVVMFISGIFSVDVFNMVAL) form a helical membrane-spanning segment. The Cytoplasmic portion of the chain corresponds to 148 to 194 (RQVTRMRIKLFSSVIRQDIGWHDLASKQNFTQSMVDDVEKIRDGISE). Residues 195 to 215 (KVGHFVYLVVGFIITVAISFS) traverse the membrane as a helical segment. Topologically, residues 216–223 (YGWKLTLA) are extracellular. A helical membrane pass occupies residues 224 to 242 (VSSYIPLVILLNYYVAKFQ). At 243–302 (GKLTAREQESYAGAGNLAEEILSSIRTVVSFGGEKSEVQRYENFLVPARKASQWKGAFSG) the chain is on the cytoplasmic side. Residues 303 to 323 (LSDAVLKSMLYLSCAGAFWYG) form a helical membrane-spanning segment. Topologically, residues 324 to 341 (VNLIIDDRNVENKEYTPA) are extracellular. Residues 342 to 362 (ILMIAFFGIIVGADNIARTAP) traverse the membrane as a helical segment. The Cytoplasmic portion of the chain corresponds to 363–731 (FLESFATARG…LQLAKQEWCY (369 aa)). The ABC transporter 1 domain maps to 405–641 (VEFQDVFFRY…EGAYYNMVRA (237 aa)). 440-447 (GSSGCGKS) provides a ligand contact to ATP. The chain crosses the membrane as a helical span at residues 732–753 (LILGTISAVAVGFLYPAFAVIF). One can recognise an ABC transmembrane type-1 2 domain in the interval 732 to 1020 (LILGTISAVA…SLAFTPAFSA (289 aa)). Residues 754 to 776 (GEFYAALAEKDPEDALRRTAVLS) are Extracellular-facing. A helical transmembrane segment spans residues 777–798 (WACLGLAFLTGLVCFLQTYLFN). The Cytoplasmic segment spans residues 799-852 (YAGIWLTTRMRAMTFNAMVNQEVGWFDDENNSVGALSARLSGEAVDIQGAIGYP). A helical transmembrane segment spans residues 853 to 873 (LSGMIQALSNFISSVSVAMYY). A topological domain (extracellular) is located at residue Asn-874. The chain crosses the membrane as a helical span at residues 875–894 (WKLALLCLANCPIIVGSVIL). The Cytoplasmic segment spans residues 895–956 (EAKMMSNAVV…VEVLIRQKLR (62 aa)). Residues 957–977 (WRGVLNSTMQASAFFAYAVAL) traverse the membrane as a helical segment. The Extracellular segment spans residues 978-993 (CYGGVLVSEGQLPFQD). The chain crosses the membrane as a helical span at residues 994–1014 (IIKVSETLLYGSMMLAQSLAF). Topologically, residues 1015 to 1302 (TPAFSAALIA…AKLHKTQKDH (288 aa)) are cytoplasmic. In terms of domain architecture, ABC transporter 2 spans 1059–1298 (VRYRGIQFRY…GGIYAKLHKT (240 aa)). Position 1094-1101 (1094-1101 (GHSGCGKS)) interacts with ATP.

This sequence belongs to the ABC transporter superfamily. ABCB family. Multidrug resistance exporter (TC 3.A.1.201) subfamily.

The protein localises to the membrane. It carries out the reaction ATP + H2O + xenobioticSide 1 = ADP + phosphate + xenobioticSide 2.. The protein is Multidrug resistance protein homolog 65 (Mdr65) of Drosophila melanogaster (Fruit fly).